Reading from the N-terminus, the 597-residue chain is FERM domain-containing protein 3 (597 aa).

One can recognise an FERM domain in the interval 32-312 (MRCTIRLLDD…ENQAFYKYAK (281 aa)). The disordered stretch occupies residues 409–435 (SAPLISSSPVKAAQEYEDPPSEEEDKI). Acidic residues predominate over residues 423 to 432 (EYEDPPSEEE). A helical transmembrane segment spans residues 531 to 551 (LLVVGLGLLLFVFPLLLLLLE).

The protein resides in the membrane. Its function is as follows. Putative tumor suppressor gene that may be implicated in the origin and progression of lung cancer. The protein is FERM domain-containing protein 3 (FRMD3) of Pongo abelii (Sumatran orangutan).